Here is an 871-residue protein sequence, read N- to C-terminus: Translation initiation factor IF-2 (871 aa).

Disordered regions lie at residues Lys-60–Lys-101 and Glu-184–Ser-203. Residues Lys-61–Lys-72 show a composition bias toward basic residues. Basic and acidic residues predominate over residues Lys-73 to Lys-101. A tr-type G domain is found at Thr-370 to Glu-537. The tract at residues Gly-379 to Thr-386 is G1. Gly-379–Thr-386 is a GTP binding site. The tract at residues Gly-404–His-408 is G2. Residues Asp-425 to Gly-428 form a G3 region. GTP is bound by residues Asp-425 to His-429 and Asn-479 to Asp-482. Positions Asn-479–Asp-482 are G4. The segment at Ser-515–Lys-517 is G5.

It belongs to the TRAFAC class translation factor GTPase superfamily. Classic translation factor GTPase family. IF-2 subfamily.

The protein localises to the cytoplasm. Functionally, one of the essential components for the initiation of protein synthesis. Protects formylmethionyl-tRNA from spontaneous hydrolysis and promotes its binding to the 30S ribosomal subunits. Also involved in the hydrolysis of GTP during the formation of the 70S ribosomal complex. The chain is Translation initiation factor IF-2 from Campylobacter jejuni subsp. jejuni serotype O:6 (strain 81116 / NCTC 11828).